The primary structure comprises 258 residues: UPF0246 protein Sden_2729 (258 aa).

Belongs to the UPF0246 family.

This Shewanella denitrificans (strain OS217 / ATCC BAA-1090 / DSM 15013) protein is UPF0246 protein Sden_2729.